Reading from the N-terminus, the 490-residue chain is UDP-N-acetylmuramoyl-L-alanyl-D-glutamate--2,6-diaminopimelate ligase (490 aa).

Position 31 (Ser31) interacts with UDP-N-acetyl-alpha-D-muramoyl-L-alanyl-D-glutamate. 109 to 115 (GTNGKTS) is a binding site for ATP. Residues Asn150, 151–152 (TT), Ser178, and Arg186 contribute to the UDP-N-acetyl-alpha-D-muramoyl-L-alanyl-D-glutamate site. The residue at position 218 (Lys218) is an N6-carboxylysine. Meso-2,6-diaminopimelate contacts are provided by residues Arg384, 408-411 (DNPR), Gly458, and Glu462. The Meso-diaminopimelate recognition motif motif lies at 408 to 411 (DNPR).

This sequence belongs to the MurCDEF family. MurE subfamily. The cofactor is Mg(2+). Post-translationally, carboxylation is probably crucial for Mg(2+) binding and, consequently, for the gamma-phosphate positioning of ATP.

The protein resides in the cytoplasm. It carries out the reaction UDP-N-acetyl-alpha-D-muramoyl-L-alanyl-D-glutamate + meso-2,6-diaminopimelate + ATP = UDP-N-acetyl-alpha-D-muramoyl-L-alanyl-gamma-D-glutamyl-meso-2,6-diaminopimelate + ADP + phosphate + H(+). The protein operates within cell wall biogenesis; peptidoglycan biosynthesis. Functionally, catalyzes the addition of meso-diaminopimelic acid to the nucleotide precursor UDP-N-acetylmuramoyl-L-alanyl-D-glutamate (UMAG) in the biosynthesis of bacterial cell-wall peptidoglycan. The protein is UDP-N-acetylmuramoyl-L-alanyl-D-glutamate--2,6-diaminopimelate ligase of Bacillus velezensis (strain DSM 23117 / BGSC 10A6 / LMG 26770 / FZB42) (Bacillus amyloliquefaciens subsp. plantarum).